The following is a 529-amino-acid chain: Peptide chain release factor 3 (529 aa).

The 270-residue stretch at 11–280 folds into the tr-type G domain; it reads AKRRTFAIIS…GLVAWAPAPM (270 aa). Residues 20-27, 88-92, and 142-145 contribute to the GTP site; these read SHPDAGKT, DTPGH, and NKLD.

The protein belongs to the TRAFAC class translation factor GTPase superfamily. Classic translation factor GTPase family. PrfC subfamily.

It localises to the cytoplasm. Increases the formation of ribosomal termination complexes and stimulates activities of RF-1 and RF-2. It binds guanine nucleotides and has strong preference for UGA stop codons. It may interact directly with the ribosome. The stimulation of RF-1 and RF-2 is significantly reduced by GTP and GDP, but not by GMP. The chain is Peptide chain release factor 3 from Salmonella gallinarum (strain 287/91 / NCTC 13346).